The chain runs to 144 residues: Large ribosomal subunit protein uL15 (144 aa).

The interval 1–51 (MRLNTIKPGAGSKSAGKRVGRGIGSGLGKTCGRGHKGQKSRAGGFHKVGFE) is disordered. Residues 21–31 (RGIGSGLGKTC) are compositionally biased toward gly residues.

The protein belongs to the universal ribosomal protein uL15 family. Part of the 50S ribosomal subunit.

In terms of biological role, binds to the 23S rRNA. The protein is Large ribosomal subunit protein uL15 of Azoarcus sp. (strain BH72).